The primary structure comprises 409 residues: Elongation factor Tu, chloroplastic (409 aa).

In terms of domain architecture, tr-type G spans Lys10 to Glu214. Residues Gly19–Thr26 are G1. GTP is bound at residue Gly19–Thr26. A Mg(2+)-binding site is contributed by Thr26. Residues Gly60–Asn64 form a G2 region. The interval Asp81–Gly84 is G3. GTP is bound by residues Asp81–His85 and Asn136–Asp139. The segment at Asn136–Asp139 is G4. A G5 region spans residues Ser174–Leu176.

The protein belongs to the TRAFAC class translation factor GTPase superfamily. Classic translation factor GTPase family. EF-Tu/EF-1A subfamily.

It localises to the plastid. The protein resides in the chloroplast. It catalyses the reaction GTP + H2O = GDP + phosphate + H(+). In terms of biological role, GTP hydrolase that promotes the GTP-dependent binding of aminoacyl-tRNA to the A-site of ribosomes during protein biosynthesis. In Stephanocyclus meneghinianus (Diatom), this protein is Elongation factor Tu, chloroplastic (tufA).